The sequence spans 267 residues: Thiamine thiazole synthase (267 aa).

NAD(+)-binding positions include Ser41, 60 to 61, Gly68, Val132, and 160 to 162; these read ER and HVD. Fe cation contacts are provided by Asp162 and His177. Met227 is a binding site for NAD(+). Arg237 lines the glycine pocket.

The protein belongs to the THI4 family. Homooctamer; tetramer of dimers. The cofactor is Fe(2+).

It carries out the reaction hydrogen sulfide + glycine + NAD(+) = ADP-5-ethyl-4-methylthiazole-2-carboxylate + nicotinamide + 3 H2O + H(+). Its pathway is cofactor biosynthesis; thiamine diphosphate biosynthesis. In terms of biological role, involved in the biosynthesis of the thiazole moiety of thiamine. Catalyzes the conversion of NAD and glycine to adenosine diphosphate 5-(2-hydroxyethyl)-4-methylthiazole-2-carboxylate (ADT), an adenylated thiazole intermediate, using free sulfide as a source of sulfur. The chain is Thiamine thiazole synthase from Saccharolobus solfataricus (strain ATCC 35092 / DSM 1617 / JCM 11322 / P2) (Sulfolobus solfataricus).